A 207-amino-acid chain; its full sequence is Outer-membrane lipoprotein LolB (207 aa).

The signal sequence occupies residues 1-21 (MTLPDFRLIRLLPLASLVLTA). A lipid anchor (N-palmitoyl cysteine) is attached at Cys22. Cys22 is lipidated: S-diacylglycerol cysteine.

This sequence belongs to the LolB family. In terms of assembly, monomer.

The protein localises to the cell outer membrane. In terms of biological role, plays a critical role in the incorporation of lipoproteins in the outer membrane after they are released by the LolA protein. This chain is Outer-membrane lipoprotein LolB, found in Citrobacter koseri (strain ATCC BAA-895 / CDC 4225-83 / SGSC4696).